Reading from the N-terminus, the 722-residue chain is Ras and EF-hand domain-containing protein (722 aa).

EF-hand domains follow at residues 5–39 and 39–74; these read DELS…ELKV and VSPS…ARGL. Residues 75 to 84 show a composition bias toward basic and acidic residues; the sequence is HMPEGKKDVE. The segment at 75 to 109 is disordered; it reads HMPEGKKDVEQGEPPKSPSTPDKEEKPEETSSPAW. Positions 156 to 335 form a coiled coil; sequence REIRLQSTEM…ANRKLHDSND (180 aa). A compositionally biased stretch (polar residues) spans 355–374; it reads INTSPGSTISRNSPKLTRCT. Disordered stretches follow at residues 355–384 and 439–491; these read INTS…PRSS and FHRS…SGAS. Residues 480 to 491 show a composition bias toward low complexity; that stretch reads SNPVSRSSSGAS. Residues 532 to 537, 635 to 638, and 672 to 673 each bind GTP; these read AVGKSS, NKAD, and AK.

The protein belongs to the small GTPase superfamily. Rab family. As to quaternary structure, homodimer.

Its subcellular location is the cytoplasm. The protein resides in the perinuclear region. Binds predominantly GDP, and also GTP. The polypeptide is Ras and EF-hand domain-containing protein (rasef) (Xenopus tropicalis (Western clawed frog)).